We begin with the raw amino-acid sequence, 778 residues long: Tastin (778 aa).

Over residues M1–L11 the composition is skewed to basic and acidic residues. The segment at M1–P115 is disordered. S16, S98, and S170 each carry phosphoserine. Positions I212 to Q244 are disordered. Residues A235–Q244 are compositionally biased toward polar residues. Phosphoserine occurs at positions 324, 334, 344, and 362. Phosphothreonine is present on T363. Position 376 is a phosphoserine (S376). Disordered stretches follow at residues E406–P425, E508–R587, and P600–L641. Residues Q513–P523 are compositionally biased toward pro residues. 4 repeat units span residues P516–Y548, P549–C581, P582–C614, and P615–C647. The interval P516–C647 is 4 X 33 AA approximate tandem repeats. Positions C560 to Q574 are enriched in basic and acidic residues. Residues E612 to L622 show a composition bias toward pro residues.

Directly binds bystin, and indirectly trophinin. Strong expression at implantation sites. Was exclusively localized to the apical side of the syncytiotrophoblast. Also found in macrophages.

It is found in the cytoplasm. In terms of biological role, could be involved with bystin and trophinin in a cell adhesion molecule complex that mediates an initial attachment of the blastocyst to uterine epithelial cells at the time of the embryo implantation. This is Tastin (TROAP) from Homo sapiens (Human).